Here is a 218-residue protein sequence, read N- to C-terminus: Outer-membrane lipoprotein LolB (218 aa).

An N-terminal signal peptide occupies residues 1-20; sequence MSQVIRTLALTGLALAGLSG. The N-palmitoyl cysteine moiety is linked to residue cysteine 21. A lipid anchor (S-diacylglycerol cysteine) is attached at cysteine 21.

Belongs to the LolB family. Monomer.

It localises to the cell outer membrane. Functionally, plays a critical role in the incorporation of lipoproteins in the outer membrane after they are released by the LolA protein. This is Outer-membrane lipoprotein LolB from Xanthomonas campestris pv. campestris (strain B100).